The chain runs to 198 residues: Holliday junction branch migration complex subunit RuvA (198 aa).

The segment at 1–64 is domain I; it reads MYEYIKGKYI…EDFIGLYGFD (64 aa). The interval 65–143 is domain II; sequence SKEELEMFKL…PDELVDSSLE (79 aa). The flexible linker stretch occupies residues 144–149; sequence IDTKDN. The tract at residues 150–198 is domain III; it reads ENVMALSEALSALIALGYSEKEAESVLKKIDKNDSVENIIKNALKALMG.

This sequence belongs to the RuvA family. In terms of assembly, homotetramer. Forms an RuvA(8)-RuvB(12)-Holliday junction (HJ) complex. HJ DNA is sandwiched between 2 RuvA tetramers; dsDNA enters through RuvA and exits via RuvB. An RuvB hexamer assembles on each DNA strand where it exits the tetramer. Each RuvB hexamer is contacted by two RuvA subunits (via domain III) on 2 adjacent RuvB subunits; this complex drives branch migration. In the full resolvosome a probable DNA-RuvA(4)-RuvB(12)-RuvC(2) complex forms which resolves the HJ.

The protein resides in the cytoplasm. Its function is as follows. The RuvA-RuvB-RuvC complex processes Holliday junction (HJ) DNA during genetic recombination and DNA repair, while the RuvA-RuvB complex plays an important role in the rescue of blocked DNA replication forks via replication fork reversal (RFR). RuvA specifically binds to HJ cruciform DNA, conferring on it an open structure. The RuvB hexamer acts as an ATP-dependent pump, pulling dsDNA into and through the RuvAB complex. HJ branch migration allows RuvC to scan DNA until it finds its consensus sequence, where it cleaves and resolves the cruciform DNA. This Clostridium beijerinckii (strain ATCC 51743 / NCIMB 8052) (Clostridium acetobutylicum) protein is Holliday junction branch migration complex subunit RuvA.